Reading from the N-terminus, the 558-residue chain is Ankyrin repeat protein OPG189 (558 aa).

7 ANK repeats span residues 65 to 95 (YGEN…NINK), 169 to 205 (YGCT…DVDK), 209 to 239 (YGNT…NIDS), 243 to 272 (NRYT…NVNA), 276 to 304 (FGTT…ELEI), 339 to 368 (YNET…DFET), and 372 to 401 (SGCT…SLKI).

It belongs to the orthopoxvirus OPG189 protein family.

In terms of biological role, contributes to viral release without involving rearrangement of host actin. The sequence is that of Ankyrin repeat protein OPG189 (OPG189) from Homo sapiens (Human).